Here is a 72-residue protein sequence, read N- to C-terminus: UPF0270 protein YheU (72 aa).

It belongs to the UPF0270 family.

This Escherichia fergusonii (strain ATCC 35469 / DSM 13698 / CCUG 18766 / IAM 14443 / JCM 21226 / LMG 7866 / NBRC 102419 / NCTC 12128 / CDC 0568-73) protein is UPF0270 protein YheU.